A 950-amino-acid polypeptide reads, in one-letter code: MFHFQRSFSSRKAHGLLSFKNRNYIHIEAPFDIAAIQDGWNIIRKHIHYPKPKSIEAPMFPILLPPPNITGKLHIGHALTITIQDALARFYAMHGYKVSFRPGTDHAGIATQSVVEKYLQKKGVYRNQLSKDELLSSIHSWQVKYQKSIINQLKSFEAIFDWDNIFYTMDQNRSEAVNEAFISLFNAGLIYRANRFVNWCPKLESAVSDIEVESQQINKPVTKYVDNTPVEFGWLYEISYQLEGSDNEQLNVSTTRPETIFGDRAIAVSPHDERYKKYVGRFVKHPLIDDLLIPVICDNAVDRHFGTGVLKITPMHSIVDYEIAKRHNIDCVSIMDKSGNLINCSKEVNGMNRLKARSKIVRLLQQRNRLVEQVPHSLILSVCSRTGDVIEPVMVPQWYLSVDSLKKEVLKSSNKLKLVPSLARKEWDSWFKKMGDWCISRQIWWGHQIPVWKILEEDKWIAAPNYEKALQLSVGKSVSQDSDVLDTWFSSALLPLSAFGWPKSKDIQPLPFIESGQDILFFWIARMALLCKYFSNELPFKEIILHPLVRDSEGRKMSKSLGNVIDPMDIINGVTLENMKKALLEGNLPISEVHKSSKQMEKAFPNGIPAQGIDIFRYGLFLCLHHEQRILLDMNSFSDAHRFVSKLWNLARYFNQYKDKENPLKLTDSQRQRISLLKMATYSKLHHAVEGVKESFEQRKFFNAADIMKNFLLNDLSSVYVELTRFDVKDSKSSAYEVYRVFSDILHIFLKLIHPIVPCISGVMLHSKIIPERKNSEFLSFPTSQQECLLVHDNQAEVVVQNAYDVLIQLRKLESPLNKSPSREHTVYISTSLEPLKYFYDAIEQSTNLKLKSISQEDTIDLMRNQTFILSRISSDTILLVPKKLYPSKRKKLRKNLDDLQKKLDKIQHTTSSSGYEKAPSYIKLKNCELQKDILVKIQDIKQALLNTEI.

Residues 1-90 constitute a mitochondrion transit peptide; that stretch reads MFHFQRSFSS…ITIQDALARF (90 aa). A 'HIGH' region motif is present at residues 67–77; it reads PNITGKLHIGH. The 'KMSKS' region motif lies at 556–560; that stretch reads KMSKS. Residue K559 participates in ATP binding.

The protein belongs to the class-I aminoacyl-tRNA synthetase family.

Its subcellular location is the mitochondrion. It carries out the reaction tRNA(Val) + L-valine + ATP = L-valyl-tRNA(Val) + AMP + diphosphate. In Schizosaccharomyces pombe (strain 972 / ATCC 24843) (Fission yeast), this protein is Valine--tRNA ligase, mitochondrial (vas1).